Here is a 243-residue protein sequence, read N- to C-terminus: Probable 6-oxopurine nucleoside phosphorylase (243 aa).

Phosphate contacts are provided by residues Thr8 and 48–49 (RH). Met174 contributes to the substrate binding site. A phosphate-binding site is contributed by Thr175. 198–200 (NYA) lines the substrate pocket.

Belongs to the PNP/MTAP phosphorylase family. MTAP subfamily. In terms of assembly, homohexamer. Dimer of a homotrimer.

It carries out the reaction a purine D-ribonucleoside + phosphate = a purine nucleobase + alpha-D-ribose 1-phosphate. Its pathway is purine metabolism; purine nucleoside salvage. Functionally, purine nucleoside phosphorylase which is highly specific for 6-oxopurine nucleosides. Cleaves guanosine or inosine to respective bases and sugar-1-phosphate molecules. Involved in purine salvage. This Archaeoglobus fulgidus (strain ATCC 49558 / DSM 4304 / JCM 9628 / NBRC 100126 / VC-16) protein is Probable 6-oxopurine nucleoside phosphorylase.